A 393-amino-acid polypeptide reads, in one-letter code: S-adenosylmethionine synthase 1 (393 aa).

Glutamate 9 provides a ligand contact to Mg(2+). Residue histidine 15 coordinates ATP. Residue glutamate 43 coordinates K(+). Residues glutamate 56 and glutamine 99 each coordinate L-methionine. Residues aspartate 167 to lysine 169, serine 235 to phenylalanine 238, aspartate 246, arginine 252 to lysine 253, alanine 269, lysine 273, and lysine 277 each bind ATP. Aspartate 246 lines the L-methionine pocket. Residue lysine 277 coordinates L-methionine.

The protein belongs to the AdoMet synthase family. In terms of assembly, homotetramer. It depends on Mn(2+) as a cofactor. Mg(2+) is required as a cofactor. The cofactor is Co(2+). Requires K(+) as cofactor. NH4(+) serves as cofactor. As to expression, mostly expressed in roots, and, to a lower extent, in hypocotyls and cotyledons.

The protein localises to the cytoplasm. It catalyses the reaction L-methionine + ATP + H2O = S-adenosyl-L-methionine + phosphate + diphosphate. Its pathway is amino-acid biosynthesis; S-adenosyl-L-methionine biosynthesis; S-adenosyl-L-methionine from L-methionine: step 1/1. With respect to regulation, inhibited by products of SAMS reaction (SAM, Pi, PPi), substrate analogs (cycloleucine and ethionine), and alternative nucleotides (GTP, CTP and ADP). Strongly repressed by PPPi. Its function is as follows. Catalyzes the formation of S-adenosylmethionine from methionine and ATP. The reaction comprises two steps that are both catalyzed by the same enzyme: formation of S-adenosylmethionine (AdoMet) and triphosphate, and subsequent hydrolysis of the triphosphate. The protein is S-adenosylmethionine synthase 1 (SAMS1) of Catharanthus roseus (Madagascar periwinkle).